The primary structure comprises 579 residues: Mycobactin import ATP-binding/permease protein IrtB (579 aa).

Residues 1-25 (MIRTLLRLVPAEKRGAVAGYAVLTL) lie on the Cytoplasmic side of the membrane. In terms of domain architecture, ABC transmembrane type-1 spans 21–299 (AVLTLLSVLL…IADLAPALET (279 aa)). Residues 26–46 (LSVLLRAVGAVLLIPLLAALF) form a helical membrane-spanning segment. At 47-48 (SD) the chain is on the periplasmic side. Residues 49-69 (TPSDAWLWLGWLTAVTLAGWV) form a helical membrane-spanning segment. Over 70–126 (TDTNTARLGFDLGFAVLSRTQHDMADRLPNVAMSWFTPDNTATARQAIAATGPELAG) the chain is Cytoplasmic. 2 helical membrane passes run 127–147 (LVVN…AIGV) and 148–168 (ALLF…AVLF). The Cytoplasmic segment spans residues 169–241 (GALALSGRLS…RLLTMQIPGQ (73 aa)). The helical transmembrane segment at 242-262 (VLFSLAGQVALIGFAGMAVWL) threads the bilayer. At 263 to 272 (TVRGQLGVPE) the chain is on the periplasmic side. Residues 273–293 (AIALIVVLVRYLEPFAAIADL) traverse the membrane as a helical segment. The Cytoplasmic portion of the chain corresponds to 294-579 (APALETTRAT…SEWAIGSTAR (286 aa)). The 234-residue stretch at 332–565 (IEFDDVRFSY…GGRFAQFWAQ (234 aa)) folds into the ABC transporter domain. Position 364–371 (364–371 (GPSGSGKT)) interacts with ATP.

This sequence belongs to the ABC transporter superfamily. Siderophore-Fe(3+) uptake transporter (SIUT) (TC 3.A.1.21) family. Forms a heterodimer with IrtA.

Its subcellular location is the cell inner membrane. Its activity is regulated as follows. The ATPase activity of IrtAB is stimulated more than 38-fold in the presence of Fe-MBT, and more than 10-fold in the presence of Fe-cMBT. Part of the ABC transporter complex IrtAB involved in the import of iron-bound mycobactin (Fe-MBT) and carboxymycobactin (Fe-cMBT). Has a preference for Fe-MBT over Fe-cMBT. Transmembrane domains (TMD) form a pore in the membrane and the ATP-binding domain (NBD) is responsible for energy generation. The polypeptide is Mycobactin import ATP-binding/permease protein IrtB (Mycolicibacterium thermoresistibile (strain ATCC 19527 / DSM 44167 / CIP 105390 / JCM 6362 / NCTC 10409 / 316) (Mycobacterium thermoresistibile)).